The sequence spans 342 residues: Biotin synthase (342 aa).

Positions 38 to 262 constitute a Radical SAM core domain; it reads GQVQISTLLS…MMPTSYVRLS (225 aa). Cys-53, Cys-57, and Cys-60 together coordinate [4Fe-4S] cluster. [2Fe-2S] cluster contacts are provided by Cys-97, Cys-128, Cys-188, and Arg-260.

It belongs to the radical SAM superfamily. Biotin synthase family. As to quaternary structure, homodimer. Requires [4Fe-4S] cluster as cofactor. [2Fe-2S] cluster is required as a cofactor.

It catalyses the reaction (4R,5S)-dethiobiotin + (sulfur carrier)-SH + 2 reduced [2Fe-2S]-[ferredoxin] + 2 S-adenosyl-L-methionine = (sulfur carrier)-H + biotin + 2 5'-deoxyadenosine + 2 L-methionine + 2 oxidized [2Fe-2S]-[ferredoxin]. It functions in the pathway cofactor biosynthesis; biotin biosynthesis; biotin from 7,8-diaminononanoate: step 2/2. In terms of biological role, catalyzes the conversion of dethiobiotin (DTB) to biotin by the insertion of a sulfur atom into dethiobiotin via a radical-based mechanism. The protein is Biotin synthase of Baumannia cicadellinicola subsp. Homalodisca coagulata.